Here is a 359-residue protein sequence, read N- to C-terminus: Cytochrome c oxidase subunit 2 (359 aa).

The N-terminal stretch at methionine 1–glycine 28 is a signal peptide. Cysteine 29 carries S-diacylglycerol cysteine lipidation. 2 helical membrane passes run valine 64–phenylalanine 84 and valine 107–phenylalanine 127. Residues proline 168–serine 203 are disordered. Basic and acidic residues predominate over residues aspartate 177 to serine 192. 6 residues coordinate Cu cation: histidine 244, cysteine 285, glutamate 287, cysteine 289, histidine 293, and methionine 296. A disordered region spans residues tyrosine 335–alanine 359.

Associates with subunits I, III and IV to form cytochrome c oxidase. The 4 subunit cytochrome c oxidase forms a supercomplex with the menaquinol-cytochrome c reductase complex (cytochrome bc1). Requires binuclear copper center (CuA) as cofactor.

Its subcellular location is the cell membrane. The catalysed reaction is 4 Fe(II)-[cytochrome c] + O2 + 8 H(+)(in) = 4 Fe(III)-[cytochrome c] + 2 H2O + 4 H(+)(out). Subunits I and II form the functional core of the enzyme complex. Electrons originating in cytochrome c are transferred via heme a and Cu(A) to the binuclear center formed by heme a3 and Cu(B). The polypeptide is Cytochrome c oxidase subunit 2 (ctaC) (Corynebacterium glutamicum (strain ATCC 13032 / DSM 20300 / JCM 1318 / BCRC 11384 / CCUG 27702 / LMG 3730 / NBRC 12168 / NCIMB 10025 / NRRL B-2784 / 534)).